Reading from the N-terminus, the 57-residue chain is MKTPTDLTSYIRVLKLASTPTWDEFSKVATIAGLGILLVGFIGFVIFSIMTFVPGGP.

Residues 33–53 traverse the membrane as a helical segment; the sequence is GLGILLVGFIGFVIFSIMTFV.

Belongs to the SecE/SEC61-gamma family. Component of the Sec protein translocase complex. Heterotrimer consisting of SecY (alpha), SecG (beta) and SecE (gamma) subunits. The heterotrimers can form oligomers, although 1 heterotrimer is thought to be able to translocate proteins. Interacts with the ribosome. May interact with SecDF, and other proteins may be involved.

It localises to the cell membrane. Functionally, essential subunit of the Sec protein translocation channel SecYEG. Clamps together the 2 halves of SecY. May contact the channel plug during translocation. This Natronomonas pharaonis (strain ATCC 35678 / DSM 2160 / CIP 103997 / JCM 8858 / NBRC 14720 / NCIMB 2260 / Gabara) (Halobacterium pharaonis) protein is Protein translocase subunit SecE.